A 192-amino-acid polypeptide reads, in one-letter code: UPF0312 protein PC1_2518 (192 aa).

Residues 1-23 (MLKKTLLSLTAVSMLASAGSALA) form the signal peptide.

It belongs to the UPF0312 family. Type 1 subfamily.

The protein resides in the periplasm. This chain is UPF0312 protein PC1_2518, found in Pectobacterium carotovorum subsp. carotovorum (strain PC1).